The primary structure comprises 644 residues: Macrolide export ATP-binding/permease protein MacB (644 aa).

The ABC transporter domain maps to 4–242 (IECKNINRYF…SNVGRIQEKA (239 aa)). Position 40–47 (40–47 (GQSGSGKS)) interacts with ATP. A run of 4 helical transmembrane segments spans residues 270–290 (LLTMLGIIIGIASVVSVVALG), 524–544 (IALISLVVGGIGVMNIMLVSV), 574–594 (LICIIGGLVGVGLSAAVSLVF), and 607–627 (AASVIGAVACSTGIGIAFGFM).

The protein belongs to the ABC transporter superfamily. Macrolide exporter (TC 3.A.1.122) family. Homodimer.

The protein localises to the cell inner membrane. Functionally, non-canonical ABC transporter that contains transmembrane domains (TMD), which form a pore in the inner membrane, and an ATP-binding domain (NBD), which is responsible for energy generation. Overexpression confers resistance against macrolides. The sequence is that of Macrolide export ATP-binding/permease protein MacB from Neisseria gonorrhoeae.